Consider the following 340-residue polypeptide: Glycerol-3-phosphate dehydrogenase [NAD(P)+] (340 aa).

NADPH contacts are provided by serine 13, tryptophan 14, and lysine 108. The sn-glycerol 3-phosphate site is built by lysine 108, glycine 139, and serine 141. NADPH is bound at residue alanine 143. Sn-glycerol 3-phosphate contacts are provided by lysine 194, aspartate 247, serine 257, arginine 258, and asparagine 259. The active-site Proton acceptor is the lysine 194. Arginine 258 serves as a coordination point for NADPH. NADPH contacts are provided by valine 282 and glutamate 284.

The protein belongs to the NAD-dependent glycerol-3-phosphate dehydrogenase family.

The protein resides in the cytoplasm. It carries out the reaction sn-glycerol 3-phosphate + NAD(+) = dihydroxyacetone phosphate + NADH + H(+). The catalysed reaction is sn-glycerol 3-phosphate + NADP(+) = dihydroxyacetone phosphate + NADPH + H(+). It participates in membrane lipid metabolism; glycerophospholipid metabolism. Catalyzes the reduction of the glycolytic intermediate dihydroxyacetone phosphate (DHAP) to sn-glycerol 3-phosphate (G3P), the key precursor for phospholipid synthesis. The chain is Glycerol-3-phosphate dehydrogenase [NAD(P)+] from Streptococcus sanguinis (strain SK36).